The following is a 582-amino-acid chain: Aspartate--tRNA(Asp/Asn) ligase (582 aa).

E177 serves as a coordination point for L-aspartate. The segment at 201 to 204 (QLFK) is aspartate. R223 contributes to the L-aspartate binding site. ATP-binding positions include 223 to 225 (RDE) and Q232. H447 contributes to the L-aspartate binding site. ATP is bound at residue E481. Residue R488 coordinates L-aspartate. An ATP-binding site is contributed by 533–536 (GLDR).

The protein belongs to the class-II aminoacyl-tRNA synthetase family. Type 1 subfamily. Homodimer.

The protein localises to the cytoplasm. It catalyses the reaction tRNA(Asx) + L-aspartate + ATP = L-aspartyl-tRNA(Asx) + AMP + diphosphate. Its function is as follows. Aspartyl-tRNA synthetase with relaxed tRNA specificity since it is able to aspartylate not only its cognate tRNA(Asp) but also tRNA(Asn). Reaction proceeds in two steps: L-aspartate is first activated by ATP to form Asp-AMP and then transferred to the acceptor end of tRNA(Asp/Asn). In Chlamydia muridarum (strain MoPn / Nigg), this protein is Aspartate--tRNA(Asp/Asn) ligase.